Here is a 111-residue protein sequence, read N- to C-terminus: Fluoride-specific ion channel FluC (111 aa).

3 helical membrane passes run 2 to 22 (GLLL…RFAL), 36 to 56 (GILL…AFLI), and 71 to 91 (FLLV…SLDI). Na(+)-binding residues include Gly-79 and Thr-82.

This sequence belongs to the fluoride channel Fluc/FEX (TC 1.A.43) family.

Its subcellular location is the cell inner membrane. The catalysed reaction is fluoride(in) = fluoride(out). With respect to regulation, na(+) is not transported, but it plays an essential structural role and its presence is essential for fluoride channel function. Fluoride-specific ion channel. Important for reducing fluoride concentration in the cell, thus reducing its toxicity. This chain is Fluoride-specific ion channel FluC, found in Francisella tularensis subsp. holarctica (strain FTNF002-00 / FTA).